The sequence spans 349 residues: N-acetyltaurine hydrolase (349 aa).

A divalent metal cation is bound by residues histidine 26, histidine 28, glutamate 169, histidine 201, histidine 230, and aspartate 298.

This sequence belongs to the metallo-dependent hydrolases superfamily. Phosphotriesterase family. The cofactor is a divalent metal cation.

The protein localises to the cytoplasm. It is found in the cytosol. It catalyses the reaction N-acetyltaurine + H2O = taurine + acetate. The enzyme catalyses N-propanoyltaurine + H2O = propanoate + taurine. It carries out the reaction N-acetyl-L-methionine + H2O = L-methionine + acetate. The catalysed reaction is N-acetyl-L-isoleucine + H2O = L-isoleucine + acetate. It catalyses the reaction N-acetyl-L-leucine + H2O = L-leucine + acetate. The enzyme catalyses N-acetyl-L-valine + H2O = L-valine + acetate. In terms of biological role, N-acetyltaurine hydrolase that catalyzes the hydrolysis of N-acetyltaurine into taurine and acetate. PTER also acts on other N-acetyl amino acids (Met, Ile, Leu, Val) and N-propionyltaurine, but at lower rates. The chain is N-acetyltaurine hydrolase (pter) from Danio rerio (Zebrafish).